Consider the following 173-residue polypeptide: Ribosome maturation factor RimM (173 aa).

Residues 97–171 (EGEFFYHEII…QITIEPMEGL (75 aa)) form the PRC barrel domain.

It belongs to the RimM family. In terms of assembly, binds ribosomal protein uS19.

It localises to the cytoplasm. An accessory protein needed during the final step in the assembly of 30S ribosomal subunit, possibly for assembly of the head region. Essential for efficient processing of 16S rRNA. May be needed both before and after RbfA during the maturation of 16S rRNA. It has affinity for free ribosomal 30S subunits but not for 70S ribosomes. The sequence is that of Ribosome maturation factor RimM from Halalkalibacterium halodurans (strain ATCC BAA-125 / DSM 18197 / FERM 7344 / JCM 9153 / C-125) (Bacillus halodurans).